We begin with the raw amino-acid sequence, 155 residues long: RING finger protein 122 (155 aa).

A helical transmembrane segment spans residues 40-60 (VIFGTGIFVFMLSLIFCCYFI). The segment at 93–134 (CAVCLEDFKGKDELGVLPCQHAFHRKCLVKWLEVRCVCPMCN) adopts an RING-type; atypical zinc-finger fold.

As to expression, widely expressed in several tissues and cell lines.

It is found in the golgi apparatus. It localises to the endoplasmic reticulum. The protein resides in the membrane. Its function is as follows. May induce necrosis and apoptosis. May play a role in cell viability. The protein is RING finger protein 122 (RNF122) of Homo sapiens (Human).